Reading from the N-terminus, the 471-residue chain is 3-isopropylmalate dehydratase large subunit (471 aa).

Residues C347, C407, and C410 each contribute to the [4Fe-4S] cluster site. The segment at 417-443 (TLQPGERSASTSNRNFEGRQGKGGRTH) is disordered.

The protein belongs to the aconitase/IPM isomerase family. LeuC type 1 subfamily. In terms of assembly, heterodimer of LeuC and LeuD. The cofactor is [4Fe-4S] cluster.

It carries out the reaction (2R,3S)-3-isopropylmalate = (2S)-2-isopropylmalate. Its pathway is amino-acid biosynthesis; L-leucine biosynthesis; L-leucine from 3-methyl-2-oxobutanoate: step 2/4. Catalyzes the isomerization between 2-isopropylmalate and 3-isopropylmalate, via the formation of 2-isopropylmaleate. The sequence is that of 3-isopropylmalate dehydratase large subunit from Nocardioides sp. (strain ATCC BAA-499 / JS614).